Reading from the N-terminus, the 123-residue chain is Large ribosomal subunit protein uL14 (123 aa).

This sequence belongs to the universal ribosomal protein uL14 family. In terms of assembly, part of the 50S ribosomal subunit. Forms a cluster with proteins L3 and L19. In the 70S ribosome, L14 and L19 interact and together make contacts with the 16S rRNA in bridges B5 and B8.

Binds to 23S rRNA. Forms part of two intersubunit bridges in the 70S ribosome. In Escherichia coli O6:K15:H31 (strain 536 / UPEC), this protein is Large ribosomal subunit protein uL14.